The chain runs to 97 residues: Integration host factor subunit alpha (97 aa).

This sequence belongs to the bacterial histone-like protein family. Heterodimer of an alpha and a beta chain.

In terms of biological role, this protein is one of the two subunits of integration host factor, a specific DNA-binding protein that functions in genetic recombination as well as in transcriptional and translational control. This Colwellia psychrerythraea (strain 34H / ATCC BAA-681) (Vibrio psychroerythus) protein is Integration host factor subunit alpha.